The primary structure comprises 91 residues: DNA-directed RNA polymerase subunit omega (91 aa).

This sequence belongs to the RNA polymerase subunit omega family. In terms of assembly, the RNAP catalytic core consists of 2 alpha, 1 beta, 1 beta' and 1 omega subunit. When a sigma factor is associated with the core the holoenzyme is formed, which can initiate transcription.

It catalyses the reaction RNA(n) + a ribonucleoside 5'-triphosphate = RNA(n+1) + diphosphate. Functionally, promotes RNA polymerase assembly. Latches the N- and C-terminal regions of the beta' subunit thereby facilitating its interaction with the beta and alpha subunits. This chain is DNA-directed RNA polymerase subunit omega, found in Photorhabdus laumondii subsp. laumondii (strain DSM 15139 / CIP 105565 / TT01) (Photorhabdus luminescens subsp. laumondii).